A 119-amino-acid polypeptide reads, in one-letter code: Urotensin-2B (119 aa).

The signal sequence occupies residues 1-28 (MNKILSSTVCFGLLTLLSVLSFLQSVHG). Residues 29-109 (RPYLTQGNEI…VDGLFSSHPS (81 aa)) constitute a propeptide that is removed on maturation. C113 and C118 are disulfide-bonded.

This sequence belongs to the urotensin-2 family.

The protein localises to the secreted. Functionally, potent vasoconstrictor. In Homo sapiens (Human), this protein is Urotensin-2B (UTS2B).